We begin with the raw amino-acid sequence, 388 residues long: Protein SopA (388 aa).

The protein belongs to the ParA family.

Its function is as follows. This protein is essential for plasmid partition. It ensures the proper distribution of newly replicated plasmids to daughter cells during cell division. SopA is trans-acting. The chain is Protein SopA (sopA) from Escherichia coli O157:H7.